The chain runs to 272 residues: MRERLFSLISKYGLRANSDLGQNFLIVDDIIERNVERAELSGRDVVLEIGPGLGVLTDALSKRAGKVYAIEKDPRLVEILRKEYNWSNVEIIEGDALKVDFPEFNKIVSNLPYQISSPITFRFLGYGFERAVLIYQLEFAQRMVARPGDRNYSRLSLMVQAKSYVELVERIGRGAFYPRPKVDSAVIVLEPKPKSEVIELNEDLVRALFQHRRSTVAAALKKSHHMLGLSKAEFKNVKDVISSAPYAEKRVFQLSPEEVKEIEAYLKVNNII.

S-adenosyl-L-methionine is bound by residues Asn23, Leu25, Gly50, Glu71, Asp95, and Asn110.

Belongs to the class I-like SAM-binding methyltransferase superfamily. rRNA adenine N(6)-methyltransferase family. RsmA subfamily.

The protein localises to the cytoplasm. Functionally, specifically dimethylates two adjacent adenosines in the loop of a conserved hairpin near the 3'-end of 16S rRNA in the 30S particle. May play a critical role in biogenesis of 30S subunits. The chain is Probable ribosomal RNA small subunit methyltransferase A from Thermococcus onnurineus (strain NA1).